We begin with the raw amino-acid sequence, 502 residues long: Cytochrome P450 71B16 (502 aa).

The chain crosses the membrane as a helical span at residues 1–21; that stretch reads MAISLLCLFLITLVSLIFVVK. Residue C444 coordinates heme.

It belongs to the cytochrome P450 family. The cofactor is heme.

The protein localises to the membrane. This Arabidopsis thaliana (Mouse-ear cress) protein is Cytochrome P450 71B16 (CYP71B16).